The primary structure comprises 118 residues: Large ribosomal subunit protein bL20 (118 aa).

The protein belongs to the bacterial ribosomal protein bL20 family.

In terms of biological role, binds directly to 23S ribosomal RNA and is necessary for the in vitro assembly process of the 50S ribosomal subunit. It is not involved in the protein synthesizing functions of that subunit. This is Large ribosomal subunit protein bL20 from Fervidobacterium nodosum (strain ATCC 35602 / DSM 5306 / Rt17-B1).